The following is a 345-amino-acid chain: Uroporphyrinogen decarboxylase (345 aa).

Residues 27 to 31 (RQAGR), Phe46, Asp76, Tyr152, Ser207, and His321 contribute to the substrate site.

The protein belongs to the uroporphyrinogen decarboxylase family. In terms of assembly, homodimer.

The protein resides in the cytoplasm. The enzyme catalyses uroporphyrinogen III + 4 H(+) = coproporphyrinogen III + 4 CO2. It participates in porphyrin-containing compound metabolism; protoporphyrin-IX biosynthesis; coproporphyrinogen-III from 5-aminolevulinate: step 4/4. Catalyzes the decarboxylation of four acetate groups of uroporphyrinogen-III to yield coproporphyrinogen-III. This is Uroporphyrinogen decarboxylase from Staphylococcus aureus (strain USA300 / TCH1516).